Consider the following 387-residue polypeptide: 8-amino-7-oxononanoate synthase (387 aa).

109 to 110 lines the pyridoxal 5'-phosphate pocket; that stretch reads GY. Histidine 134 contributes to the substrate binding site. Pyridoxal 5'-phosphate is bound by residues serine 182, histidine 214, and threonine 242. An N6-(pyridoxal phosphate)lysine modification is found at lysine 245. Position 359 (threonine 359) interacts with substrate.

The protein belongs to the class-II pyridoxal-phosphate-dependent aminotransferase family. BioF subfamily. Homodimer. Pyridoxal 5'-phosphate is required as a cofactor.

The enzyme catalyses 6-carboxyhexanoyl-[ACP] + L-alanine + H(+) = (8S)-8-amino-7-oxononanoate + holo-[ACP] + CO2. Its pathway is cofactor biosynthesis; biotin biosynthesis. Its function is as follows. Catalyzes the decarboxylative condensation of pimeloyl-[acyl-carrier protein] and L-alanine to produce 8-amino-7-oxononanoate (AON), [acyl-carrier protein], and carbon dioxide. The sequence is that of 8-amino-7-oxononanoate synthase from Haemophilus ducreyi (strain 35000HP / ATCC 700724).